A 530-amino-acid chain; its full sequence is Feruloyl esterase C (530 aa).

A signal peptide spans 1 to 25; that stretch reads MMLTSAILLLTLGVQLSHADDSSRE. Intrachain disulfides connect C31–C78, C66–C117, C190–C444, C259–C276, C285–C294, and C506–C528. S191 (acyl-ester intermediate) is an active-site residue. 5 residues coordinate Ca(2+): D260, D263, A265, D267, and V269. Residues D403 and H443 each act as charge relay system in the active site.

This sequence belongs to the tannase family.

It localises to the secreted. The enzyme catalyses feruloyl-polysaccharide + H2O = ferulate + polysaccharide.. Involved in degradation of plant cell walls. Hydrolyzes the feruloyl-arabinose ester bond in arabinoxylans as well as the feruloyl-galactose and feruloyl-arabinose ester bonds in pectin. Active against methyl esters of sinapate (MSA) and caffeate (MCA). The chain is Feruloyl esterase C (faeC) from Talaromyces stipitatus (strain ATCC 10500 / CBS 375.48 / QM 6759 / NRRL 1006) (Penicillium stipitatum).